The following is a 204-amino-acid chain: Peptidyl-tRNA hydrolase (204 aa).

Tyr14 lines the tRNA pocket. The active-site Proton acceptor is His19. TRNA-binding residues include Phe64, Asn66, and Asn112.

Belongs to the PTH family. As to quaternary structure, monomer.

The protein resides in the cytoplasm. The enzyme catalyses an N-acyl-L-alpha-aminoacyl-tRNA + H2O = an N-acyl-L-amino acid + a tRNA + H(+). In terms of biological role, hydrolyzes ribosome-free peptidyl-tRNAs (with 1 or more amino acids incorporated), which drop off the ribosome during protein synthesis, or as a result of ribosome stalling. Catalyzes the release of premature peptidyl moieties from peptidyl-tRNA molecules trapped in stalled 50S ribosomal subunits, and thus maintains levels of free tRNAs and 50S ribosomes. This is Peptidyl-tRNA hydrolase from Azorhizobium caulinodans (strain ATCC 43989 / DSM 5975 / JCM 20966 / LMG 6465 / NBRC 14845 / NCIMB 13405 / ORS 571).